Consider the following 200-residue polypeptide: Small ribosomal subunit protein uS4 (200 aa).

Positions 22–42 are disordered; that stretch reads TGKELEKRPYAPGPHGPNQRK. One can recognise an S4 RNA-binding domain in the interval 92 to 152; that stretch reads ARLDNLVYRM…EKSRNLAVIK (61 aa).

Belongs to the universal ribosomal protein uS4 family. Part of the 30S ribosomal subunit. Contacts protein S5. The interaction surface between S4 and S5 is involved in control of translational fidelity.

Functionally, one of the primary rRNA binding proteins, it binds directly to 16S rRNA where it nucleates assembly of the body of the 30S subunit. With S5 and S12 plays an important role in translational accuracy. The chain is Small ribosomal subunit protein uS4 from Bacillus cytotoxicus (strain DSM 22905 / CIP 110041 / 391-98 / NVH 391-98).